The following is a 326-amino-acid chain: Fructose-1,6-bisphosphatase class 1 (326 aa).

Glu-90, Asp-111, Leu-113, and Asp-114 together coordinate Mg(2+). Residues 114-117 (DGSS), Tyr-222, and Lys-253 contribute to the substrate site. Mg(2+) is bound at residue Glu-259.

It belongs to the FBPase class 1 family. In terms of assembly, homotetramer. Requires Mg(2+) as cofactor.

It localises to the cytoplasm. It carries out the reaction beta-D-fructose 1,6-bisphosphate + H2O = beta-D-fructose 6-phosphate + phosphate. It functions in the pathway carbohydrate biosynthesis; gluconeogenesis. The protein is Fructose-1,6-bisphosphatase class 1 of Citrifermentans bemidjiense (strain ATCC BAA-1014 / DSM 16622 / JCM 12645 / Bem) (Geobacter bemidjiensis).